The primary structure comprises 727 residues: Cyclin-T1 (727 aa).

At S117 the chain carries Phosphoserine. The short motif at 253 to 270 (KRIRNWRACQAAKKTKAD) is the Nuclear localization signal, and interaction with Tat-TAR RNA element. The segment covering 302–322 (MSTSSTTSTVPSLPTTEESSS) has biased composition (low complexity). Positions 302–326 (MSTSSTTSTVPSLPTTEESSSNLSG) are disordered. K343 participates in a covalent cross-link: Glycyl lysine isopeptide (Lys-Gly) (interchain with G-Cter in SUMO2). Residues 386–427 (SAKVSLKEYRAKHAEELAAQKRQLENMEANVKSQYAYAAQNL) are a coiled coil. The residue at position 390 (S390) is a Phosphoserine. K392 is modified (N6-acetyllysine). K417 participates in a covalent cross-link: Glycyl lysine isopeptide (Lys-Gly) (interchain with G-Cter in SUMO2). ADP-ribosylserine occurs at positions 418, 476, and 477. Positions 482-552 (IKMRIKVHAA…RPGDPKHSSQ (71 aa)) are histidine-rich domain (HRD). A Glycyl lysine isopeptide (Lys-Gly) (interchain with G-Cter in SUMO2) cross-link involves residue K483. The span at 486–508 (IKVHAAPDKHNSIDDSVTKSREH) shows a compositional bias: basic and acidic residues. 2 disordered regions span residues 486–591 (IKVH…DHPA) and 692–727 (LNPR…PLPK). Residue K487 is modified to N6-(ADP-ribosyl)lysine. H489 is subject to ADP-ribosylhistidine. Residues S497 and S501 each carry the phosphoserine modification. Positions 509-532 (KEKHKTHPSNHHHHHNHHSHKHSH) are enriched in basic residues. H532 bears the ADP-ribosylhistidine mark. ADP-ribosylserine occurs at positions 533, 551, and 554. H558 carries the post-translational modification ADP-ribosylhistidine. Low complexity predominate over residues 562-572 (SLSSSFSSSSS). ADP-ribosylserine is present on S565. S566 is subject to Phosphoserine. Over residues 711 to 727 (LPPLPSEPPPPLPPLPK) the composition is skewed to pro residues.

This sequence belongs to the cyclin family. Cyclin C subfamily. Cyclin-T1 is the predominant cyclin that associates with CDK9 to form a heterodimer called P-TEFb. P-TEFb forms a complex with AFF4/AF5Q31. Component of a complex which is at least composed of HTATSF1/Tat-SF1, P-TEFb complex, RNA pol II, SUPT5H, and NCL/nucleolin. Component of the 7SK snRNP complex at least composed of P-TEFb (composed of CDK9 and CCNT1/cyclin-T1), HEXIM1, HEXIM2, BCDIN3, SART3 proteins and 7SK and U6 snRNAs. Interacts (via central region) with ZMYND8 (via N-terminus); the interaction is direct and the association appears to occur between homodimeric ZMYND8 and the activated form of the P-TEFb complex. Interacts with BRD4, targets chromatin binding. Interacts with JMJD6. Interacts with MDFIC. Interacts with HSF1. Interacts with HTATSF1. Interacts with TBX21. Post-translationally, ADP-ribosylation on serine residues by PARP1 in response to DNA damage disrupts the phase separation activity of CCNT1, thereby preventing activation of CDK9.

It localises to the nucleus. Regulatory subunit of the cyclin-dependent kinase pair (CDK9/cyclin-T1) complex, also called positive transcription elongation factor B (P-TEFb), which facilitates the transition from abortive to productive elongation by phosphorylating the CTD (C-terminal domain) of the large subunit of RNA polymerase II (RNA Pol II). Required to activate the protein kinase activity of CDK9: acts by mediating formation of liquid-liquid phase separation (LLPS) that enhances binding of P-TEFb to the CTD of RNA Pol II. The protein is Cyclin-T1 (CCNT1) of Equus caballus (Horse).